Consider the following 186-residue polypeptide: NADH-dependent FMN reductase SfnE (186 aa).

The protein belongs to the SsuE family.

The catalysed reaction is FMNH2 + NAD(+) = FMN + NADH + 2 H(+). In terms of biological role, involved in the dimethyl sulfide degradation pathway. Catalyzes the NADH-dependent reduction of FMN. The chain is NADH-dependent FMN reductase SfnE from Pseudomonas putida (Arthrobacter siderocapsulatus).